The following is a 176-amino-acid chain: MDFKQYSPEELKECSMIEVVHSVLGDKRQATTFNELVQEIAQVLGLSQEQVNAKIAQFYTDLNIDGRFINLGENRWGLRSWYPYEQIDEEILPQPKPKKKRKVEDDGFDDYIEEDEDFDDADVTEDEDDDVEDLDKVLEDEDGDDDDLDDLDEDDDDFAEEELEYDETEEEEEEEL.

An HTH HARE-type domain is found at 14 to 81 (CSMIEVVHSV…GENRWGLRSW (68 aa)). The disordered stretch occupies residues 90–176 (EILPQPKPKK…ETEEEEEEEL (87 aa)). The span at 106-176 (DGFDDYIEED…ETEEEEEEEL (71 aa)) shows a compositional bias: acidic residues.

The protein belongs to the RpoE family. As to quaternary structure, RNAP is composed of a core of 2 alpha, a beta and a beta' subunits. The core is associated with a delta subunit and one of several sigma factors.

In terms of biological role, participates in both the initiation and recycling phases of transcription. In the presence of the delta subunit, RNAP displays an increased specificity of transcription, a decreased affinity for nucleic acids, and an increased efficiency of RNA synthesis because of enhanced recycling. The protein is Probable DNA-directed RNA polymerase subunit delta of Bacillus thuringiensis subsp. konkukian (strain 97-27).